A 332-amino-acid polypeptide reads, in one-letter code: 5,10-methylenetetrahydromethanopterin reductase (332 aa).

This sequence belongs to the mer family.

It is found in the cytoplasm. The enzyme catalyses 5-methyl-5,6,7,8-tetrahydromethanopterin + oxidized coenzyme F420-(gamma-L-Glu)(n) + H(+) = 5,10-methylenetetrahydromethanopterin + reduced coenzyme F420-(gamma-L-Glu)(n). The protein operates within metabolic intermediate metabolism; lactate oxidation. In terms of biological role, catalyzes the oxidation of methyl-H(4)MPT to methylene-H(4)MPT. The sequence is that of 5,10-methylenetetrahydromethanopterin reductase from Archaeoglobus fulgidus (strain ATCC 49558 / DSM 4304 / JCM 9628 / NBRC 100126 / VC-16).